The primary structure comprises 414 residues: Protein SOSEKI 2 (414 aa).

The tract at residues 44 to 135 (RRVQVVYYLT…YVLKGSEITD (92 aa)) is DIX-like oligomerization domain. A disordered region spans residues 171–273 (SFDDAELYVG…GDPVEPGSGR (103 aa)). A compositionally biased stretch (acidic residues) spans 173 to 192 (DDAELYVGEEEEEEDGEYEL). Residues 205-229 (PQSRCSRGVSTETMESTEQKPNLTK) show a composition bias toward polar residues. The segment covering 230-242 (TEQDLQVRSDSSD) has biased composition (basic and acidic residues). Residues 283–284 (CG) carry the Association to cell membranes motif.

This sequence belongs to the SOSEKI family. Homodimer. Forms long polymer filaments with other SOKs proteins polymers (e.g. SOK1, SOK2, SOK3 and SOK4) crucial for polar localization and biological activity. Binds to ANGUSTIFOLIA (AN). Expressed during embryogenesis and in roots.

It localises to the cell membrane. Its function is as follows. Part of a three-gene cluster containing FLC, UFC and DFC, which is coordinately regulated in response to vernalization. Also regulated by FLX. SOSEKI proteins (SOK1-5) locally interpret global polarity cues and can influence cell division orientation to coordinate cell polarization relative to body axes, probably by guiding ANGUSTIFOLIA (AN) polarized localization. The chain is Protein SOSEKI 2 from Arabidopsis thaliana (Mouse-ear cress).